The primary structure comprises 206 residues: LOB domain-containing protein 2 (206 aa).

The disordered stretch occupies residues Met1–Ser20. The LOB domain maps to Gln23–Ile123.

It belongs to the LOB domain-containing protein family.

This Arabidopsis thaliana (Mouse-ear cress) protein is LOB domain-containing protein 2 (LBD2).